The primary structure comprises 1186 residues: Pumilio homolog 1 (1186 aa).

Serine 2 is modified (N-acetylserine). A Phosphoserine modification is found at serine 19. The interval 22-73 (LKHHPQEPANPNMPVVLTSGTGSQAQPQPAANQALAAGTHSSPVPGSIGVAG) is disordered. The segment covering 45–58 (QAQPQPAANQALAA) has biased composition (low complexity). 3 positions are modified to phosphoserine: serine 75, serine 98, and serine 106. Threonine 112 carries the phosphothreonine modification. Residues serine 124, serine 159, serine 197, serine 209, and serine 229 each carry the phosphoserine modification. The disordered stretch occupies residues 233 to 272 (SCLRKGGFGPRDADSDENDKGEKKNKGTFDGDKLGDLKEE). Residues 250–272 (NDKGEKKNKGTFDGDKLGDLKEE) are compositionally biased toward basic and acidic residues. Serine 305 carries the phosphoserine modification. Over residues 485–502 (TNSANQQTTPQAQQGQQQ) the composition is skewed to low complexity. Disordered regions lie at residues 485-524 (TNSA…GQQT) and 613-648 (AGTT…FYGN). The segment covering 511-524 (RPLTPNQNQQGQQT) has biased composition (polar residues). The residue at position 514 (threonine 514) is a Phosphothreonine. Over residues 626-639 (QQPQPQPQQQPNNN) the composition is skewed to low complexity. A phosphoserine mark is found at serine 709 and serine 714. Residues 742-773 (GPVGMPLPSQGPGHSQTPPPSLSSHGSSSSLN) form a disordered region. Low complexity predominate over residues 763–773 (LSSHGSSSSLN). Arginine 796 carries the post-translational modification Omega-N-methylarginine. Residues serine 806 and serine 822 each carry the phosphoserine modification. Positions 828–1168 (GRSRLLEDFR…HILAKLEKYY (341 aa)) constitute a PUM-HD domain. Pumilio repeat units follow at residues 848–883 (EIAG…LVFN), 884–919 (EILQ…ALAE), 920–955 (RIRG…EMVR), 956–991 (ELDG…FIID), 992–1027 (AFKG…PILE), 1028–1063 (ELHQ…KIVA), 1064–1099 (EIRG…VLID), and 1103–1142 (TMND…IVMH). The interval 863-867 (SRFIQ) is adenine-nucleotide binding in RNA target. Residues 899 to 903 (NYVIQ) form a uracil-nucleotide binding in RNA target region. Positions 935-939 (CRVIQ) are adenine-nucleotide binding in RNA target. A non-specific-nucleotide binding in RNA target region spans residues 971-975 (NHVVQ). The segment at 1007–1011 (CRVIQ) is adenine-nucleotide binding in RNA target. The interval 1043 to 1047 (NYVIQ) is uracil-nucleotide binding in RNA target. The interval 1079–1083 (SNVVE) is guanine-nucleotide binding in RNA target. The interval 1122–1126 (NYVVQ) is uracil-nucleotide binding in RNA target.

Recruits the CCR4-POP2-NOT deadenylase leading to translational inhibition and mRNA degradation. In case of viral infection, interacts with DHX58. Interacts with TRIM71 (via NHL repeats) in an RNA-dependent manner. Post-translationally, phosphorylation at Ser-714 promotes RNA-binding activity. Following growth factor stimulation phosphorylated at Ser-714, promoting binding to the 3'-UTR of CDKN1B/p27 mRNA. As to expression, expressed in brain, heart, kidney, muscle, intestine and stomach. Not expressed in cerebellum, corpus callosum, caudate nucleus, hippocampus, medulla oblongata and putamen. Expressed in all fetal tissues tested.

The protein resides in the cytoplasm. It localises to the P-body. It is found in the cytoplasmic granule. Its function is as follows. Sequence-specific RNA-binding protein that acts as a post-transcriptional repressor by binding the 3'-UTR of mRNA targets. Binds to an RNA consensus sequence, the Pumilio Response Element (PRE), 5'-UGUANAUA-3', that is related to the Nanos Response Element (NRE). Mediates post-transcriptional repression of transcripts via different mechanisms: acts via direct recruitment of the CCR4-POP2-NOT deadenylase leading to translational inhibition and mRNA degradation. Also mediates deadenylation-independent repression by promoting accessibility of miRNAs. Following growth factor stimulation, phosphorylated and binds to the 3'-UTR of CDKN1B/p27 mRNA, inducing a local conformational change that exposes miRNA-binding sites, promoting association of miR-221 and miR-222, efficient suppression of CDKN1B/p27 expression, and rapid entry to the cell cycle. Acts as a post-transcriptional repressor of E2F3 mRNAs by binding to its 3'-UTR and facilitating miRNA regulation. Represses a program of genes necessary to maintain genomic stability such as key mitotic, DNA repair and DNA replication factors. Its ability to repress those target mRNAs is regulated by the lncRNA NORAD (non-coding RNA activated by DNA damage) which, due to its high abundance and multitude of PUMILIO binding sites, is able to sequester a significant fraction of PUM1 and PUM2 in the cytoplasm. Involved in neuronal functions by regulating ATXN1 mRNA levels: acts by binding to the 3'-UTR of ATXN1 transcripts, leading to their down-regulation independently of the miRNA machinery. Plays a role in cytoplasmic sensing of viral infection. In testis, acts as a post-transcriptional regulator of spermatogenesis by binding to the 3'-UTR of mRNAs coding for regulators of p53/TP53. Involved in embryonic stem cell renewal by facilitating the exit from the ground state: acts by targeting mRNAs coding for naive pluripotency transcription factors and accelerates their down-regulation at the onset of differentiation. Binds specifically to miRNA MIR199A precursor, with PUM2, regulates miRNA MIR199A expression at a postranscriptional level. The sequence is that of Pumilio homolog 1 from Homo sapiens (Human).